Here is a 232-residue protein sequence, read N- to C-terminus: BTB/POZ domain-containing protein KCTD11 (232 aa).

The BTB domain maps to 1–49 (MLGAMFRADTLMPANLNPQGDGHYFIDRDGKAFRHILNFLRLGRLDLPR).

As to quaternary structure, homopentamer. Interacts with KCTD6 and KCTD21; KCTD11 and KCTD6 or KCTD21 may associate in pentameric assemblies. Component of the BCR(KCTD11) E3 ubiquitin ligase complex, at least composed of CUL3 and KCTD11 and RBX1. Interacts (via BTB domain) with CUL3; initially a 4:4 stoichiometry has been reported, however, electron microscopy revealed pentameric states of the BTB domain. As to expression, weakly expressed in lung. In the cerebellum, higher expression in non proliferating external granule cells layer than in highly proliferating ones.

It functions in the pathway protein modification; protein ubiquitination. In terms of biological role, plays a role as a marker and a regulator of neuronal differentiation; Up-regulated by a variety of neurogenic signals, such as retinoic acid, epidermal growth factor/EGF and NGFB/nerve growth factor. Induces apoptosis, growth arrest and the expression of cyclin-dependent kinase inhibitor CDKN1B. Plays a role as a tumor repressor and inhibits cell growth and tumorigenicity of medulloblastoma (MDB). Acts as a probable substrate-specific adapter for a BCR (BTB-CUL3-RBX1) E3 ubiquitin-protein ligase complex towards HDAC1. Functions as antagonist of the Hedgehog pathway on cell proliferation and differentiation by affecting the nuclear transfer of transcription factor GLI1, thus maintaining cerebellar granule cells in undifferentiated state, this effect probably occurs via HDAC1 down-regulation, keeping GLI1 acetylated and inactive. When knock-down, Hedgehog antagonism is impaired and proliferation of granule cells is sustained. Activates the caspase cascade. In Mus musculus (Mouse), this protein is BTB/POZ domain-containing protein KCTD11 (Kctd11).